The sequence spans 538 residues: ATP synthase subunit alpha, mitochondrial (538 aa).

197 to 204 (GDRQTGKT) serves as a coordination point for ATP. The segment at 228 to 248 (FCIYVAVGQKRSTVAQIVKRL) is essential and sufficient for enterobactin binding.

This sequence belongs to the ATPase alpha/beta chains family. As to quaternary structure, subunit of the F-type ATPase which has 2 components, CF(1) - the catalytic core - and CF(0) - the membrane proton channel. In terms of tissue distribution, ubiquitous (at protein level).

The protein localises to the mitochondrion. The protein resides in the mitochondrion inner membrane. Its function is as follows. Mitochondrial membrane ATP synthase (F(1)F(0) ATP synthase or Complex V) produces ATP from ADP in the presence of a proton gradient across the membrane which is generated by electron transport complexes of the respiratory chain. F-type ATPases consist of two structural domains, F(1) - containing the extramembraneous catalytic core, and F(0) - containing the membrane proton channel, linked together by a central stalk and a peripheral stalk. During catalysis, ATP synthesis in the catalytic domain of F(1) is coupled via a rotary mechanism of the central stalk subunits to proton translocation. Subunits alpha and beta form the catalytic core in F(1). Rotation of the central stalk against the surrounding subunits leads to hydrolysis of ATP in three separate catalytic sites on the beta subunits. Subunit alpha does not bear the catalytic high-affinity ATP-binding sites. Binds the bacterial siderophore enterobactin and is required for the assimilation of enterobactin-bound iron from non-pathogenic bacteria. Promotes mitochondrial accumulation of enterobactin-derived iron ions. The polypeptide is ATP synthase subunit alpha, mitochondrial (Caenorhabditis elegans).